The primary structure comprises 320 residues: o-succinylbenzoate synthase (320 aa).

Lys133 (proton donor) is an active-site residue. Positions 161, 190, and 213 each coordinate Mg(2+). Lys235 functions as the Proton acceptor in the catalytic mechanism.

The protein belongs to the mandelate racemase/muconate lactonizing enzyme family. MenC type 1 subfamily. The cofactor is a divalent metal cation.

The catalysed reaction is (1R,6R)-6-hydroxy-2-succinyl-cyclohexa-2,4-diene-1-carboxylate = 2-succinylbenzoate + H2O. The protein operates within quinol/quinone metabolism; 1,4-dihydroxy-2-naphthoate biosynthesis; 1,4-dihydroxy-2-naphthoate from chorismate: step 4/7. It participates in quinol/quinone metabolism; menaquinone biosynthesis. In terms of biological role, converts 2-succinyl-6-hydroxy-2,4-cyclohexadiene-1-carboxylate (SHCHC) to 2-succinylbenzoate (OSB). The polypeptide is o-succinylbenzoate synthase (Escherichia coli O9:H4 (strain HS)).